Here is a 732-residue protein sequence, read N- to C-terminus: E3 ubiquitin-protein ligase TRIM56 (732 aa).

The RING-type zinc-finger motif lies at 21–60 (CKICLEQLRVPKTLPCLHTYCQDCLAQLAEGSRLRCPECR). The segment at 164-205 (RQAAQCPQHPGEALRFLCQPCSQLLCRECRLDPHLDHPCLPL) adopts a B box-type zinc-finger fold. Residues cysteine 169, histidine 172, cysteine 192, and histidine 197 each contribute to the Zn(2+) site. Residues 211–286 (ARRPGLEELL…LRAHVEAAEE (76 aa)) adopt a coiled-coil conformation. Positions 374–384 (LPQKDSGKDGA) are enriched in basic and acidic residues. Residues 374–462 (LPQKDSGKDG…PAPGPNLEGS (89 aa)) are disordered. Residues 389–405 (GDATQPQSRDGVQTPNQ) are compositionally biased toward polar residues. The residue at position 402 (threonine 402) is a Phosphothreonine. Over residues 407-416 (DGAKTPKESR) the composition is skewed to basic and acidic residues. At threonine 419 the chain carries Phosphothreonine. A compositionally biased stretch (basic residues) spans 434 to 446 (SNKKRKFKGRLKS). Serine 452 is subject to Phosphoserine.

This sequence belongs to the TRIM/RBCC family. In terms of assembly, interacts with STING1. Interacts with TICAM1.

It is found in the cytoplasm. It carries out the reaction S-ubiquitinyl-[E2 ubiquitin-conjugating enzyme]-L-cysteine + [acceptor protein]-L-lysine = [E2 ubiquitin-conjugating enzyme]-L-cysteine + N(6)-ubiquitinyl-[acceptor protein]-L-lysine.. The protein operates within protein modification; protein ubiquitination. Functionally, E3 ubiquitin-protein ligase that plays a key role in innate antiviral immunity by mediating ubiquitination of CGAS and STING1. In response to pathogen- and host-derived double-stranded DNA (dsDNA), targets STING1 to 'Lys-63'-linked ubiquitination, thereby promoting its homodimerization, a step required for the production of type I interferon IFN-beta. Also mediate monoubiquitination of CGAS, thereby promoting CGAS oligomerization and subsequent activation. Independently of its E3 ubiquitin ligase activity, positive regulator of TLR3 signaling. Potentiates extracellular double stranded RNA (dsRNA)-induced expression of IFNB1 and interferon-stimulated genes ISG15, IFIT1/ISG56, CXCL10, OASL and CCL5/RANTES. Restricts bovine viral diarrhea virus (BVDV) replication. The polypeptide is E3 ubiquitin-protein ligase TRIM56 (Bos taurus (Bovine)).